We begin with the raw amino-acid sequence, 201 residues long: Peptidyl-prolyl cis-trans isomerase FKBP11 (201 aa).

Positions 1 to 27 (MTLSPLLLPLQLLLLLLFSGAVCRAEA) are cleaved as a signal peptide. One can recognise a PPIase FKBP-type domain in the interval 57 to 144 (GDTLHIHYTG…QYDVELIALI (88 aa)). The helical transmembrane segment at 156–176 (ILPLVGIAMVPALLGLIGYHL) threads the bilayer.

This sequence belongs to the FKBP-type PPIase family. As to quaternary structure, interacts with IFITM5.

The protein resides in the membrane. The enzyme catalyses [protein]-peptidylproline (omega=180) = [protein]-peptidylproline (omega=0). Its function is as follows. PPIases accelerate the folding of proteins during protein synthesis. In Mus musculus (Mouse), this protein is Peptidyl-prolyl cis-trans isomerase FKBP11 (Fkbp11).